The chain runs to 157 residues: Phosphopantetheine adenylyltransferase (157 aa).

S9 contacts substrate. ATP contacts are provided by residues 9-10 (SF) and H17. The substrate site is built by K41, V73, and K87. ATP-binding positions include 88–90 (GLR), E98, and 122–128 (YSFVSSS).

The protein belongs to the bacterial CoaD family. In terms of assembly, homohexamer. The cofactor is Mg(2+).

Its subcellular location is the cytoplasm. The catalysed reaction is (R)-4'-phosphopantetheine + ATP + H(+) = 3'-dephospho-CoA + diphosphate. The protein operates within cofactor biosynthesis; coenzyme A biosynthesis; CoA from (R)-pantothenate: step 4/5. Reversibly transfers an adenylyl group from ATP to 4'-phosphopantetheine, yielding dephospho-CoA (dPCoA) and pyrophosphate. In Mycobacterium marinum (strain ATCC BAA-535 / M), this protein is Phosphopantetheine adenylyltransferase.